Here is a 209-residue protein sequence, read N- to C-terminus: Imidazoleglycerol-phosphate dehydratase (209 aa).

The protein belongs to the imidazoleglycerol-phosphate dehydratase family.

Its subcellular location is the cytoplasm. It carries out the reaction D-erythro-1-(imidazol-4-yl)glycerol 3-phosphate = 3-(imidazol-4-yl)-2-oxopropyl phosphate + H2O. It participates in amino-acid biosynthesis; L-histidine biosynthesis; L-histidine from 5-phospho-alpha-D-ribose 1-diphosphate: step 6/9. This is Imidazoleglycerol-phosphate dehydratase from Paracidovorax citrulli (strain AAC00-1) (Acidovorax citrulli).